The following is a 346-amino-acid chain: Tryptophan--tRNA ligase (346 aa).

ATP is bound by residues Gln10–Ser12 and Gly18–Asn19. The short motif at Ala11 to Asn19 is the 'HIGH' region element. Residue Asp140 participates in L-tryptophan binding. ATP is bound by residues Gly152–Asp154, Ile191, and Lys200–Ser204. A 'KMSKS' region motif is present at residues Lys200 to Ser204.

This sequence belongs to the class-I aminoacyl-tRNA synthetase family. Homodimer.

The protein resides in the cytoplasm. It catalyses the reaction tRNA(Trp) + L-tryptophan + ATP = L-tryptophyl-tRNA(Trp) + AMP + diphosphate + H(+). In terms of biological role, catalyzes the attachment of tryptophan to tRNA(Trp). The chain is Tryptophan--tRNA ligase from Mycoplasma pneumoniae (strain ATCC 29342 / M129 / Subtype 1) (Mycoplasmoides pneumoniae).